We begin with the raw amino-acid sequence, 135 residues long: Retinol-binding protein 1 (135 aa).

Residue W9 is modified to Omega-N-methylarginine. The segment at 22 to 32 (RALDVNVALRK) is important for interaction with STRA6. 3 residues coordinate all-trans-retinol: K41, M63, and Q109.

Belongs to the calycin superfamily. Fatty-acid binding protein (FABP) family. Interacts (only as retinol-free apoprotein) with STRA6. In terms of tissue distribution, detected in nearly all the tissues with higher expression in adult ovary, pancreas, pituitary gland and adrenal gland, and fetal liver.

The protein localises to the cytoplasm. Its subcellular location is the lipid droplet. Functionally, cytoplasmic retinol-binding protein. Accepts retinol from the transport protein STRA6, and thereby contributes to retinol uptake, storage and retinoid homeostasis. This chain is Retinol-binding protein 1 (RBP1), found in Homo sapiens (Human).